The chain runs to 187 residues: Imidazoleglycerol-phosphate dehydratase (187 aa).

The protein belongs to the imidazoleglycerol-phosphate dehydratase family.

It is found in the cytoplasm. The catalysed reaction is D-erythro-1-(imidazol-4-yl)glycerol 3-phosphate = 3-(imidazol-4-yl)-2-oxopropyl phosphate + H2O. It functions in the pathway amino-acid biosynthesis; L-histidine biosynthesis; L-histidine from 5-phospho-alpha-D-ribose 1-diphosphate: step 6/9. The polypeptide is Imidazoleglycerol-phosphate dehydratase (Pyrobaculum calidifontis (strain DSM 21063 / JCM 11548 / VA1)).